A 162-amino-acid polypeptide reads, in one-letter code: NADH-quinone oxidoreductase subunit I 2 (162 aa).

4Fe-4S ferredoxin-type domains are found at residues 52 to 82 and 93 to 122; these read LRRY…IEAG and VRYD…EGPN. C62, C65, C68, C72, C102, C105, C108, and C112 together coordinate [4Fe-4S] cluster.

It belongs to the complex I 23 kDa subunit family. As to quaternary structure, NDH-1 is composed of 14 different subunits. Subunits NuoA, H, J, K, L, M, N constitute the membrane sector of the complex. [4Fe-4S] cluster is required as a cofactor.

The protein resides in the cell inner membrane. The enzyme catalyses a quinone + NADH + 5 H(+)(in) = a quinol + NAD(+) + 4 H(+)(out). NDH-1 shuttles electrons from NADH, via FMN and iron-sulfur (Fe-S) centers, to quinones in the respiratory chain. The immediate electron acceptor for the enzyme in this species is believed to be ubiquinone. Couples the redox reaction to proton translocation (for every two electrons transferred, four hydrogen ions are translocated across the cytoplasmic membrane), and thus conserves the redox energy in a proton gradient. The chain is NADH-quinone oxidoreductase subunit I 2 from Rhodopseudomonas palustris (strain HaA2).